We begin with the raw amino-acid sequence, 310 residues long: Ribosomal RNA small subunit methyltransferase H (310 aa).

S-adenosyl-L-methionine is bound by residues 32–34 (AGH), Asp-51, Phe-84, Asp-102, and Gln-109.

Belongs to the methyltransferase superfamily. RsmH family.

It localises to the cytoplasm. The catalysed reaction is cytidine(1402) in 16S rRNA + S-adenosyl-L-methionine = N(4)-methylcytidine(1402) in 16S rRNA + S-adenosyl-L-homocysteine + H(+). Specifically methylates the N4 position of cytidine in position 1402 (C1402) of 16S rRNA. In Campylobacter hominis (strain ATCC BAA-381 / DSM 21671 / CCUG 45161 / LMG 19568 / NCTC 13146 / CH001A), this protein is Ribosomal RNA small subunit methyltransferase H.